Consider the following 314-residue polypeptide: 2,3-dihydroxyphenylpropionate/2,3-dihydroxicinnamic acid 1,2-dioxygenase (314 aa).

Catalysis depends on His115, which acts as the Proton donor. His179 (proton acceptor) is an active-site residue.

Belongs to the LigB/MhpB extradiol dioxygenase family. In terms of assembly, homotetramer. Fe(2+) is required as a cofactor.

It carries out the reaction 3-(2,3-dihydroxyphenyl)propanoate + O2 = (2Z,4E)-2-hydroxy-6-oxonona-2,4-dienedioate + H(+). It catalyses the reaction (2E)-3-(2,3-dihydroxyphenyl)prop-2-enoate + O2 = (2Z,4E,7E)-2-hydroxy-6-oxonona-2,4,7-trienedioate + H(+). The protein operates within aromatic compound metabolism; 3-phenylpropanoate degradation. Catalyzes the non-heme iron(II)-dependent oxidative cleavage of 2,3-dihydroxyphenylpropionic acid and 2,3-dihydroxicinnamic acid into 2-hydroxy-6-ketononadienedioate and 2-hydroxy-6-ketononatrienedioate, respectively. The protein is 2,3-dihydroxyphenylpropionate/2,3-dihydroxicinnamic acid 1,2-dioxygenase of Escherichia coli O139:H28 (strain E24377A / ETEC).